A 521-amino-acid chain; its full sequence is Acidic amino acid decarboxylase GADL1 (521 aa).

Lys333 carries the post-translational modification N6-(pyridoxal phosphate)lysine.

Belongs to the group II decarboxylase family. In terms of assembly, homodimer. It depends on pyridoxal 5'-phosphate as a cofactor. Expressed very weakly in neurons and not detected in astrocytes, brain or liver.

It catalyses the reaction L-aspartate + H(+) = beta-alanine + CO2. The catalysed reaction is 3-sulfino-L-alanine + H(+) = hypotaurine + CO2. The enzyme catalyses L-cysteate + H(+) = taurine + CO2. Its function is as follows. May catalyze the decarboxylation of L-aspartate, 3-sulfino-L-alanine (cysteine sulfinic acid), and L-cysteate to beta-alanine, hypotaurine and taurine, respectively. Does not exhibit any decarboxylation activity toward glutamate. The sequence is that of Acidic amino acid decarboxylase GADL1 (GADL1) from Homo sapiens (Human).